Here is a 169-residue protein sequence, read N- to C-terminus: Ribosome maturation factor RimM (169 aa).

The region spanning 96 to 169 is the PRC barrel domain; the sequence is DGEYYWADLI…RILVDWGLDY (74 aa).

This sequence belongs to the RimM family. In terms of assembly, binds ribosomal protein uS19.

It is found in the cytoplasm. Functionally, an accessory protein needed during the final step in the assembly of 30S ribosomal subunit, possibly for assembly of the head region. Essential for efficient processing of 16S rRNA. May be needed both before and after RbfA during the maturation of 16S rRNA. It has affinity for free ribosomal 30S subunits but not for 70S ribosomes. This Chromobacterium violaceum (strain ATCC 12472 / DSM 30191 / JCM 1249 / CCUG 213 / NBRC 12614 / NCIMB 9131 / NCTC 9757 / MK) protein is Ribosome maturation factor RimM.